Consider the following 375-residue polypeptide: 1-deoxy-D-xylulose 5-phosphate reductoisomerase (375 aa).

The NADPH site is built by Thr10, Gly11, Ser12, Val13, Lys37, and Asn114. Lys115 contacts 1-deoxy-D-xylulose 5-phosphate. Glu116 is an NADPH binding site. Asp136 provides a ligand contact to Mn(2+). Ser137, Glu138, Ser162, and His185 together coordinate 1-deoxy-D-xylulose 5-phosphate. Residue Glu138 coordinates Mn(2+). Gly191 serves as a coordination point for NADPH. Residues Ser198, Asn203, Lys204, and Glu207 each coordinate 1-deoxy-D-xylulose 5-phosphate. Residue Glu207 participates in Mn(2+) binding.

The protein belongs to the DXR family. Mg(2+) serves as cofactor. Requires Mn(2+) as cofactor.

It catalyses the reaction 2-C-methyl-D-erythritol 4-phosphate + NADP(+) = 1-deoxy-D-xylulose 5-phosphate + NADPH + H(+). The protein operates within isoprenoid biosynthesis; isopentenyl diphosphate biosynthesis via DXP pathway; isopentenyl diphosphate from 1-deoxy-D-xylulose 5-phosphate: step 1/6. Catalyzes the NADPH-dependent rearrangement and reduction of 1-deoxy-D-xylulose-5-phosphate (DXP) to 2-C-methyl-D-erythritol 4-phosphate (MEP). This chain is 1-deoxy-D-xylulose 5-phosphate reductoisomerase, found in Sulfurihydrogenibium sp. (strain YO3AOP1).